The following is a 243-amino-acid chain: 2-C-methyl-D-erythritol 4-phosphate cytidylyltransferase (243 aa).

It belongs to the IspD/TarI cytidylyltransferase family. IspD subfamily.

It catalyses the reaction 2-C-methyl-D-erythritol 4-phosphate + CTP + H(+) = 4-CDP-2-C-methyl-D-erythritol + diphosphate. The protein operates within isoprenoid biosynthesis; isopentenyl diphosphate biosynthesis via DXP pathway; isopentenyl diphosphate from 1-deoxy-D-xylulose 5-phosphate: step 2/6. In terms of biological role, catalyzes the formation of 4-diphosphocytidyl-2-C-methyl-D-erythritol from CTP and 2-C-methyl-D-erythritol 4-phosphate (MEP). This is 2-C-methyl-D-erythritol 4-phosphate cytidylyltransferase from Rhodopirellula baltica (strain DSM 10527 / NCIMB 13988 / SH1).